Reading from the N-terminus, the 230-residue chain is 2,3-bisphosphoglycerate-dependent phosphoglycerate mutase (230 aa).

Substrate-binding positions include 8 to 15 (RHGESEWN), 21 to 22 (TG), R60, 87 to 90 (ERHY), K98, 114 to 115 (RR), and 183 to 184 (GN). H9 acts as the Tele-phosphohistidine intermediate in catalysis. Residue E87 is the Proton donor/acceptor of the active site.

It belongs to the phosphoglycerate mutase family. BPG-dependent PGAM subfamily.

The enzyme catalyses (2R)-2-phosphoglycerate = (2R)-3-phosphoglycerate. It participates in carbohydrate degradation; glycolysis; pyruvate from D-glyceraldehyde 3-phosphate: step 3/5. Its function is as follows. Catalyzes the interconversion of 2-phosphoglycerate and 3-phosphoglycerate. This is 2,3-bisphosphoglycerate-dependent phosphoglycerate mutase from Streptococcus agalactiae serotype Ia (strain ATCC 27591 / A909 / CDC SS700).